The chain runs to 575 residues: Triokinase/FMN cyclase (575 aa).

The DhaK domain maps to 9–336 (SVAGCADDAL…IDAETTAAAW (328 aa)). Residues 56 to 59 (GSGH), Lys-109, and Asp-114 each bind dihydroxyacetone. The active-site Tele-hemiaminal-histidine intermediate is the His-221. The tract at residues 348–367 (KRSRVAPAEPQEAPDSTAAG) is disordered. Ser-350 is subject to Phosphoserine. The 200-residue stretch at 372-571 (KRMALVLERV…AAAILRAILE (200 aa)) folds into the DhaL domain. Residues 401–404 (DGDC), 446–447 (SS), Gly-486, and 494–495 (TM) contribute to the ATP site. 2 positions are modified to phosphoserine: Ser-511 and Ser-545. Residue 556-558 (DPG) coordinates ATP.

Belongs to the dihydroxyacetone kinase (DAK) family. Homodimer. Interacts with IFIH1 (via the CARD domains), the interaction is inhibited by viral infection. It depends on Mg(2+) as a cofactor. Mn(2+) serves as cofactor. The cofactor is Co(2+). Detected in erythrocytes (at protein level).

It catalyses the reaction dihydroxyacetone + ATP = dihydroxyacetone phosphate + ADP + H(+). It carries out the reaction D-glyceraldehyde + ATP = D-glyceraldehyde 3-phosphate + ADP + H(+). The catalysed reaction is FAD = riboflavin cyclic-4',5'-phosphate + AMP + H(+). With respect to regulation, each activity is inhibited by the substrate(s) of the other. Its function is as follows. Catalyzes both the phosphorylation of dihydroxyacetone and of glyceraldehyde, and the splitting of ribonucleoside diphosphate-X compounds among which FAD is the best substrate. Represses IFIH1-mediated cellular antiviral response. The sequence is that of Triokinase/FMN cyclase from Homo sapiens (Human).